Reading from the N-terminus, the 386-residue chain is Tubulin beta-1 chain (386 aa).

GTP-binding residues include glutamate 7, serine 76, glycine 80, threonine 81, glycine 82, asparagine 142, and asparagine 164. Glutamate 7 is a binding site for Mg(2+). A disordered region spans residues tyrosine 363–methionine 386. The span at threonine 367–methionine 386 shows a compositional bias: acidic residues.

It belongs to the tubulin family. Dimer of alpha and beta chains. A typical microtubule is a hollow water-filled tube with an outer diameter of 25 nm and an inner diameter of 15 nM. Alpha-beta heterodimers associate head-to-tail to form protofilaments running lengthwise along the microtubule wall with the beta-tubulin subunit facing the microtubule plus end conferring a structural polarity. Microtubules usually have 13 protofilaments but different protofilament numbers can be found in some organisms and specialized cells. Requires Mg(2+) as cofactor.

It localises to the cytoplasm. Its subcellular location is the cytoskeleton. In terms of biological role, tubulin is the major constituent of microtubules, a cylinder consisting of laterally associated linear protofilaments composed of alpha- and beta-tubulin heterodimers. Microtubules grow by the addition of GTP-tubulin dimers to the microtubule end, where a stabilizing cap forms. Below the cap, tubulin dimers are in GDP-bound state, owing to GTPase activity of alpha-tubulin. In Avena sativa (Oat), this protein is Tubulin beta-1 chain (TUBB1).